Reading from the N-terminus, the 636-residue chain is DNA-directed RNA polymerase III subunit RPC3 (636 aa).

Residues 366–385 (SMQRRSQERSTHQGQSHKRL) are disordered. Residues 563-584 (LAWNIANSIHKTEILKEENFTL) are leucine-zipper.

Belongs to the RNA polymerase beta chain family. Component of the RNA polymerase III (Pol III) complex consisting of 17 subunits.

The protein localises to the nucleus. DNA-dependent RNA polymerase catalyzes the transcription of DNA into RNA using the four ribonucleoside triphosphates as substrates. Specific core component of RNA polymerase III which synthesizes small RNAs, such as 5S rRNA and tRNAs. The polypeptide is DNA-directed RNA polymerase III subunit RPC3 (RPC82) (Eremothecium gossypii (strain ATCC 10895 / CBS 109.51 / FGSC 9923 / NRRL Y-1056) (Yeast)).